The following is a 117-amino-acid chain: Holo-[acyl-carrier-protein] synthase (117 aa).

Mg(2+) is bound by residues D8 and E57.

The protein belongs to the P-Pant transferase superfamily. AcpS family. The cofactor is Mg(2+).

It is found in the cytoplasm. The catalysed reaction is apo-[ACP] + CoA = holo-[ACP] + adenosine 3',5'-bisphosphate + H(+). Functionally, transfers the 4'-phosphopantetheine moiety from coenzyme A to a Ser of acyl-carrier-protein. This is Holo-[acyl-carrier-protein] synthase from Limosilactobacillus reuteri (Lactobacillus reuteri).